The chain runs to 287 residues: tRNA N(3)-cytidine methyltransferase METTL6 (287 aa).

Positions 45, 49, 87, 110, 136, 137, and 157 each coordinate S-adenosyl-L-methionine. A disordered region spans residues 267–287; the sequence is RKPPKDPAPTTDSASLLRKEF.

The protein belongs to the methyltransferase superfamily. METL family. Monomer. Interacts with SARS1/SerRS; interaction is mediated via tRNA(Ser) and is required for N(3)-methylcytidine methylation.

It is found in the cytoplasm. It localises to the nucleus. The catalysed reaction is cytidine(32) in tRNA(Ser) + S-adenosyl-L-methionine = N(3)-methylcytidine(32) in tRNA(Ser) + S-adenosyl-L-homocysteine + H(+). In terms of biological role, S-adenosyl-L-methionine-dependent methyltransferase that mediates N(3)-methylcytidine modification of residue 32 of the tRNA anticodon loop of tRNA(Ser), including tRNA(Ser)(UGA) and tRNA(Ser)(GCU). Interaction with SARS1/SerRS is required for N(3)-methylcytidine methylation. This chain is tRNA N(3)-cytidine methyltransferase METTL6 (Mettl6), found in Rattus norvegicus (Rat).